The chain runs to 250 residues: 2,3-bisphosphoglycerate-dependent phosphoglycerate mutase (250 aa).

Substrate-binding positions include 10–17, 23–24, R62, 89–92, K100, 116–117, and 185–186; these read RHGESQWN, TG, ERHY, RR, and GN. H11 serves as the catalytic Tele-phosphohistidine intermediate. The active-site Proton donor/acceptor is the E89.

Belongs to the phosphoglycerate mutase family. BPG-dependent PGAM subfamily. Homodimer.

The enzyme catalyses (2R)-2-phosphoglycerate = (2R)-3-phosphoglycerate. Its pathway is carbohydrate degradation; glycolysis; pyruvate from D-glyceraldehyde 3-phosphate: step 3/5. Its function is as follows. Catalyzes the interconversion of 2-phosphoglycerate and 3-phosphoglycerate. This is 2,3-bisphosphoglycerate-dependent phosphoglycerate mutase from Cronobacter sakazakii (strain ATCC BAA-894) (Enterobacter sakazakii).